The following is a 197-amino-acid chain: Glycerol-3-phosphate acyltransferase (197 aa).

The next 4 helical transmembrane spans lie at 5-25, 70-90, 111-131, and 153-173; these read LILITAYLLGSIPFALLVGKI, LPVLFSVHIHPLLAGVCAVIG, VMLFYSPFLFVSLLTVFFIVL, and IFFTDDIPLMIAVSLLTAFIF.

It belongs to the PlsY family. In terms of assembly, probably interacts with PlsX.

The protein resides in the cell membrane. The catalysed reaction is an acyl phosphate + sn-glycerol 3-phosphate = a 1-acyl-sn-glycero-3-phosphate + phosphate. It participates in lipid metabolism; phospholipid metabolism. Catalyzes the transfer of an acyl group from acyl-phosphate (acyl-PO(4)) to glycerol-3-phosphate (G3P) to form lysophosphatidic acid (LPA). This enzyme utilizes acyl-phosphate as fatty acyl donor, but not acyl-CoA or acyl-ACP. The protein is Glycerol-3-phosphate acyltransferase of Geobacillus sp. (strain WCH70).